The primary structure comprises 953 residues: Isoleucine--tRNA ligase (953 aa).

Positions 61 to 71 match the 'HIGH' region motif; sequence PYANGALHIGH. Residue E564 coordinates L-isoleucyl-5'-AMP. The 'KMSKS' region signature appears at 605-609; it reads KMSKS. Residue K608 coordinates ATP. Zn(2+) is bound by residues C922, C925, C942, and C945.

Belongs to the class-I aminoacyl-tRNA synthetase family. IleS type 1 subfamily. As to quaternary structure, monomer. The cofactor is Zn(2+).

It is found in the cytoplasm. The catalysed reaction is tRNA(Ile) + L-isoleucine + ATP = L-isoleucyl-tRNA(Ile) + AMP + diphosphate. Functionally, catalyzes the attachment of isoleucine to tRNA(Ile). As IleRS can inadvertently accommodate and process structurally similar amino acids such as valine, to avoid such errors it has two additional distinct tRNA(Ile)-dependent editing activities. One activity is designated as 'pretransfer' editing and involves the hydrolysis of activated Val-AMP. The other activity is designated 'posttransfer' editing and involves deacylation of mischarged Val-tRNA(Ile). The chain is Isoleucine--tRNA ligase from Thermosynechococcus vestitus (strain NIES-2133 / IAM M-273 / BP-1).